The chain runs to 203 residues: Histidine biosynthesis bifunctional protein HisIE (203 aa).

The phosphoribosyl-AMP cyclohydrolase stretch occupies residues 1–114 (MLTEQQRREL…FGDASHQWLF (114 aa)). A phosphoribosyl-ATP pyrophosphohydrolase region spans residues 115-203 (LYQLEQLLAE…VIDDLRKRHQ (89 aa)).

This sequence in the N-terminal section; belongs to the PRA-CH family. It in the C-terminal section; belongs to the PRA-PH family.

The protein localises to the cytoplasm. It carries out the reaction 1-(5-phospho-beta-D-ribosyl)-ATP + H2O = 1-(5-phospho-beta-D-ribosyl)-5'-AMP + diphosphate + H(+). The enzyme catalyses 1-(5-phospho-beta-D-ribosyl)-5'-AMP + H2O = 1-(5-phospho-beta-D-ribosyl)-5-[(5-phospho-beta-D-ribosylamino)methylideneamino]imidazole-4-carboxamide. It participates in amino-acid biosynthesis; L-histidine biosynthesis; L-histidine from 5-phospho-alpha-D-ribose 1-diphosphate: step 2/9. It functions in the pathway amino-acid biosynthesis; L-histidine biosynthesis; L-histidine from 5-phospho-alpha-D-ribose 1-diphosphate: step 3/9. The polypeptide is Histidine biosynthesis bifunctional protein HisIE (hisI) (Salmonella typhi).